The following is a 753-amino-acid chain: Catalase-peroxidase (753 aa).

Residues 1-39 (MLPRVNKRSNCIAKKTSNRLISAVSLAIASLCISQSALA) form the signal peptide. A cross-link (tryptophyl-tyrosyl-methioninium (Trp-Tyr) (with M-267)) is located at residues 118–241 (WHSTGTYRMS…LAAVQMGLIY (124 aa)). The Proton acceptor role is filled by histidine 119. Positions 241 to 267 (YVNPEGPNGNHDPISAAADIRDVFARM) form a cross-link, tryptophyl-tyrosyl-methioninium (Tyr-Met) (with W-118). Histidine 282 contacts heme b.

It belongs to the peroxidase family. Peroxidase/catalase subfamily. As to quaternary structure, homodimer or homotetramer. It depends on heme b as a cofactor. Post-translationally, formation of the three residue Trp-Tyr-Met cross-link is important for the catalase, but not the peroxidase activity of the enzyme.

It catalyses the reaction H2O2 + AH2 = A + 2 H2O. It carries out the reaction 2 H2O2 = O2 + 2 H2O. Its function is as follows. Bifunctional enzyme with both catalase and broad-spectrum peroxidase activity. The polypeptide is Catalase-peroxidase (Pseudoalteromonas atlantica (strain T6c / ATCC BAA-1087)).